The sequence spans 142 residues: uncharacterized protein (142 aa).

It belongs to the IIV-6 115R family.

This is an uncharacterized protein from Invertebrate iridescent virus 3 (IIV-3).